A 306-amino-acid polypeptide reads, in one-letter code: Dirigent protein 24 (306 aa).

The first 21 residues, 1-21 (MAKALSLTIFLFLLIASNVQS), serve as a signal peptide directing secretion. The tract at residues 36–61 (PQVPEEEDDSPQAVTTTPTPIPLPGP) is disordered.

Belongs to the plant dirigent protein family. In terms of assembly, homodimer.

The protein resides in the secreted. It localises to the extracellular space. It is found in the apoplast. Functionally, dirigent proteins impart stereoselectivity on the phenoxy radical-coupling reaction, yielding optically active lignans from two molecules of coniferyl alcohol in the biosynthesis of lignans, flavonolignans, and alkaloids and thus plays a central role in plant secondary metabolism. The polypeptide is Dirigent protein 24 (DIR24) (Arabidopsis thaliana (Mouse-ear cress)).